Consider the following 482-residue polypeptide: tRNA sulfurtransferase (482 aa).

A THUMP domain is found at 61-165; it reads LAIRDALTRI…DDRLLLIKGR (105 aa). ATP is bound by residues 183-184, Lys-265, Gly-287, and Gln-296; that span reads LI. Cys-344 and Cys-456 are joined by a disulfide. One can recognise a Rhodanese domain in the interval 404–482; sequence FGPNDVILDI…GFNNVKVYRP (79 aa). Cys-456 acts as the Cysteine persulfide intermediate in catalysis.

Belongs to the ThiI family.

It is found in the cytoplasm. The catalysed reaction is [ThiI sulfur-carrier protein]-S-sulfanyl-L-cysteine + a uridine in tRNA + 2 reduced [2Fe-2S]-[ferredoxin] + ATP + H(+) = [ThiI sulfur-carrier protein]-L-cysteine + a 4-thiouridine in tRNA + 2 oxidized [2Fe-2S]-[ferredoxin] + AMP + diphosphate. It catalyses the reaction [ThiS sulfur-carrier protein]-C-terminal Gly-Gly-AMP + S-sulfanyl-L-cysteinyl-[cysteine desulfurase] + AH2 = [ThiS sulfur-carrier protein]-C-terminal-Gly-aminoethanethioate + L-cysteinyl-[cysteine desulfurase] + A + AMP + 2 H(+). Its pathway is cofactor biosynthesis; thiamine diphosphate biosynthesis. In terms of biological role, catalyzes the ATP-dependent transfer of a sulfur to tRNA to produce 4-thiouridine in position 8 of tRNAs, which functions as a near-UV photosensor. Also catalyzes the transfer of sulfur to the sulfur carrier protein ThiS, forming ThiS-thiocarboxylate. This is a step in the synthesis of thiazole, in the thiamine biosynthesis pathway. The sulfur is donated as persulfide by IscS. In Escherichia coli (strain K12 / MC4100 / BW2952), this protein is tRNA sulfurtransferase.